Reading from the N-terminus, the 505-residue chain is ATP synthase subunit beta (505 aa).

157-164 (GGAGVGKT) is a binding site for ATP.

The protein belongs to the ATPase alpha/beta chains family. F-type ATPases have 2 components, CF(1) - the catalytic core - and CF(0) - the membrane proton channel. CF(1) has five subunits: alpha(3), beta(3), gamma(1), delta(1), epsilon(1). CF(0) has three main subunits: a(1), b(2) and c(9-12). The alpha and beta chains form an alternating ring which encloses part of the gamma chain. CF(1) is attached to CF(0) by a central stalk formed by the gamma and epsilon chains, while a peripheral stalk is formed by the delta and b chains.

It localises to the cell inner membrane. The enzyme catalyses ATP + H2O + 4 H(+)(in) = ADP + phosphate + 5 H(+)(out). Produces ATP from ADP in the presence of a proton gradient across the membrane. The catalytic sites are hosted primarily by the beta subunits. In Bacteroides thetaiotaomicron (strain ATCC 29148 / DSM 2079 / JCM 5827 / CCUG 10774 / NCTC 10582 / VPI-5482 / E50), this protein is ATP synthase subunit beta.